The primary structure comprises 212 residues: Dihydrophenazinedicarboxylate synthase (212 aa).

Ser8 provides a ligand contact to substrate. FMN contacts are provided by residues 63-66 (RVIA) and 78-79 (CT). His80 is a binding site for substrate. Residues 84-85 (RK) and Gln107 contribute to the FMN site. Substrate is bound by residues Arg129 and Ser137. Residues 142–143 (QS) and Arg195 contribute to the FMN site.

Belongs to the pyridoxamine 5'-phosphate oxidase family. The cofactor is FMN.

The enzyme catalyses (1R,6R)-1,4,5,5a,6,9-hexahydrophenazine-1,6-dicarboxylate + O2 = (1R,10aS)-1,4,10,10a-tetrahydrophenazine-1,6-dicarboxylate + H2O2. The catalysed reaction is (1R,10aS)-1,4,10,10a-tetrahydrophenazine-1,6-dicarboxylate + O2 = (5aS)-5,5a-dihydrophenazine-1,6-dicarboxylate + H2O2. It carries out the reaction (1R,10aS)-1,4,10,10a-tetrahydrophenazine-1-carboxylate + O2 = (10aS)-10,10a-dihydrophenazine-1-carboxylate + H2O2. It catalyses the reaction (1R)-1,4,5,10-tetrahydrophenazine-1-carboxylate + O2 = (10aS)-10,10a-dihydrophenazine-1-carboxylate + H2O2. The protein operates within antibiotic biosynthesis; phenazine biosynthesis. Involved in the biosynthesis of the antibiotic phenazine, a nitrogen-containing heterocyclic molecule having important roles in virulence, competition and biological control. Catalyzes several oxidations in the terminal steps of core phenazine biosynthesis. It oxidizes both hexahydrophenazine-1,6-dicarboxylic acid (HHPDC) and tetrahydrophenazine-1-carboxylic acid (THPCA) and thereby contributes to the generation of both phenazine-1,6-dicarboxylic acid (PDC) and phenazine-1-carboxylic acid (PCA). It synthesizes phenazines in their reduced form, which are the likely end products in vivo. The protein is Dihydrophenazinedicarboxylate synthase of Burkholderia lata (strain ATCC 17760 / DSM 23089 / LMG 22485 / NCIMB 9086 / R18194 / 383).